The chain runs to 144 residues: Large ribosomal subunit protein uL13 (144 aa).

This sequence belongs to the universal ribosomal protein uL13 family. In terms of assembly, part of the 50S ribosomal subunit.

Its function is as follows. This protein is one of the early assembly proteins of the 50S ribosomal subunit, although it is not seen to bind rRNA by itself. It is important during the early stages of 50S assembly. This is Large ribosomal subunit protein uL13 from Pelotomaculum thermopropionicum (strain DSM 13744 / JCM 10971 / SI).